Consider the following 542-residue polypeptide: Formate--tetrahydrofolate ligase (542 aa).

53 to 60 serves as a coordination point for ATP; the sequence is TPAGEGKT.

This sequence belongs to the formate--tetrahydrofolate ligase family.

The catalysed reaction is (6S)-5,6,7,8-tetrahydrofolate + formate + ATP = (6R)-10-formyltetrahydrofolate + ADP + phosphate. It functions in the pathway one-carbon metabolism; tetrahydrofolate interconversion. The polypeptide is Formate--tetrahydrofolate ligase (Thermotoga petrophila (strain ATCC BAA-488 / DSM 13995 / JCM 10881 / RKU-1)).